The sequence spans 505 residues: Amidophosphoribosyltransferase (505 aa).

Catalysis depends on C2, which acts as the Nucleophile. One can recognise a Glutamine amidotransferase type-2 domain in the interval 2-236 (CGIVGIAGVM…PGEAIYITEE (235 aa)). Residues T305, D367, and D368 each contribute to the Mg(2+) site.

It in the C-terminal section; belongs to the purine/pyrimidine phosphoribosyltransferase family. As to quaternary structure, homotetramer. Requires Mg(2+) as cofactor.

The catalysed reaction is 5-phospho-beta-D-ribosylamine + L-glutamate + diphosphate = 5-phospho-alpha-D-ribose 1-diphosphate + L-glutamine + H2O. The protein operates within purine metabolism; IMP biosynthesis via de novo pathway; N(1)-(5-phospho-D-ribosyl)glycinamide from 5-phospho-alpha-D-ribose 1-diphosphate: step 1/2. Inhibited by iodoacetamide and by the glutamine analogs chloroketone and DON. Functionally, catalyzes the formation of phosphoribosylamine from phosphoribosylpyrophosphate (PRPP) and glutamine. Can also use NH(3) in place of glutamine. This chain is Amidophosphoribosyltransferase, found in Escherichia coli (strain K12).